A 265-amino-acid polypeptide reads, in one-letter code: Mlc titration factor A (265 aa).

Zn(2+)-binding residues include His-111, His-148, His-152, and Glu-211.

The protein belongs to the MtfA family. In terms of assembly, interacts with Mlc. It depends on Zn(2+) as a cofactor.

It is found in the cytoplasm. Functionally, involved in the modulation of the activity of the glucose-phosphotransferase system (glucose-PTS). Interacts with the transcriptional repressor Mlc, preventing its interaction with DNA and leading to the modulation of expression of genes regulated by Mlc, including ptsG, which encodes the PTS system glucose-specific EIICB component. Its function is as follows. Shows zinc-dependent metallopeptidase activity. The polypeptide is Mlc titration factor A (Escherichia coli O127:H6 (strain E2348/69 / EPEC)).